Here is a 349-residue protein sequence, read N- to C-terminus: Hydroxymethylglutaryl-CoA synthase (349 aa).

Asp29 contributes to the (3S)-3-hydroxy-3-methylglutaryl-CoA binding site. Catalysis depends on Glu81, which acts as the Proton donor/acceptor. Cys113, Ser154, Thr202, and His235 together coordinate (3S)-3-hydroxy-3-methylglutaryl-CoA. The Acyl-thioester intermediate role is filled by Cys113. His235 (proton donor/acceptor) is an active-site residue. Residue Arg240 coordinates CoA. (3S)-3-hydroxy-3-methylglutaryl-CoA-binding residues include Arg244, Asn267, and Ser297.

The protein belongs to the thiolase-like superfamily. Archaeal HMG-CoA synthase family. As to quaternary structure, interacts with acetoacetyl-CoA thiolase that catalyzes the precedent step in the pathway and with a DUF35 protein. The acetoacetyl-CoA thiolase/HMG-CoA synthase complex channels the intermediate via a fused CoA-binding site, which allows for efficient coupling of the endergonic thiolase reaction with the exergonic HMGCS reaction.

It carries out the reaction acetoacetyl-CoA + acetyl-CoA + H2O = (3S)-3-hydroxy-3-methylglutaryl-CoA + CoA + H(+). It functions in the pathway metabolic intermediate biosynthesis; (R)-mevalonate biosynthesis; (R)-mevalonate from acetyl-CoA: step 2/3. Catalyzes the condensation of acetyl-CoA with acetoacetyl-CoA to form 3-hydroxy-3-methylglutaryl-CoA (HMG-CoA). Functions in the mevalonate (MVA) pathway leading to isopentenyl diphosphate (IPP), a key precursor for the biosynthesis of isoprenoid compounds that are building blocks of archaeal membrane lipids. The polypeptide is Hydroxymethylglutaryl-CoA synthase (Pyrobaculum arsenaticum (strain DSM 13514 / JCM 11321 / PZ6)).